Reading from the N-terminus, the 264-residue chain is Thymidylate synthase (264 aa).

Arg21 is a dUMP binding site. Position 51 (His51) interacts with (6R)-5,10-methylene-5,6,7,8-tetrahydrofolate. Arg126–Arg127 serves as a coordination point for dUMP. Cys146 (nucleophile) is an active-site residue. Residues Arg166–Asp169, Asn177, and His207–Tyr209 each bind dUMP. Position 169 (Asp169) interacts with (6R)-5,10-methylene-5,6,7,8-tetrahydrofolate. Ala263 serves as a coordination point for (6R)-5,10-methylene-5,6,7,8-tetrahydrofolate.

It belongs to the thymidylate synthase family. Bacterial-type ThyA subfamily. In terms of assembly, homodimer.

The protein localises to the cytoplasm. The enzyme catalyses dUMP + (6R)-5,10-methylene-5,6,7,8-tetrahydrofolate = 7,8-dihydrofolate + dTMP. It participates in pyrimidine metabolism; dTTP biosynthesis. Functionally, catalyzes the reductive methylation of 2'-deoxyuridine-5'-monophosphate (dUMP) to 2'-deoxythymidine-5'-monophosphate (dTMP) while utilizing 5,10-methylenetetrahydrofolate (mTHF) as the methyl donor and reductant in the reaction, yielding dihydrofolate (DHF) as a by-product. This enzymatic reaction provides an intracellular de novo source of dTMP, an essential precursor for DNA biosynthesis. The chain is Thymidylate synthase from Ruthia magnifica subsp. Calyptogena magnifica.